A 318-amino-acid chain; its full sequence is Bis(5'-nucleosyl)-tetraphosphatase, symmetrical (318 aa).

Positions 269-318 are disordered; that stretch reads PGREVTGPAPVARAPRRPRERLGRQRSRGNRGNAGNTAVPAKPPVDTPQD. The span at 282–297 shows a compositional bias: basic residues; it reads APRRPRERLGRQRSRG. Over residues 309-318 the composition is skewed to pro residues; that stretch reads AKPPVDTPQD.

The protein belongs to the Ap4A hydrolase family.

It catalyses the reaction P(1),P(4)-bis(5'-adenosyl) tetraphosphate + H2O = 2 ADP + 2 H(+). Its function is as follows. Hydrolyzes diadenosine 5',5'''-P1,P4-tetraphosphate to yield ADP. In Xanthomonas oryzae pv. oryzae (strain PXO99A), this protein is Bis(5'-nucleosyl)-tetraphosphatase, symmetrical.